A 232-amino-acid polypeptide reads, in one-letter code: Large ribosomal subunit protein uL1 (232 aa).

Belongs to the universal ribosomal protein uL1 family. As to quaternary structure, part of the 50S ribosomal subunit.

Functionally, binds directly to 23S rRNA. The L1 stalk is quite mobile in the ribosome, and is involved in E site tRNA release. Its function is as follows. Protein L1 is also a translational repressor protein, it controls the translation of the L11 operon by binding to its mRNA. In Stenotrophomonas maltophilia (strain K279a), this protein is Large ribosomal subunit protein uL1.